Consider the following 252-residue polypeptide: Centromere protein V (252 aa).

A disordered region spans residues 1–80; that stretch reads MRRTRSAVAT…EEPPPAVTPA (80 aa). Ser18 carries the post-translational modification Phosphoserine. The residue at position 39 (Arg39) is an Omega-N-methylarginine. A compositionally biased stretch (pro residues) spans 54-64; sequence SAKPRPKPPPR. The residue at position 78 (Thr78) is a Phosphothreonine. The region spanning 125 to 237 is the CENP-V/GFA domain; it reads HTGGCHCGAV…TEEFNGSDWE (113 aa). Residues Cys129, Cys131, Cys149, Cys151, Cys154, Cys193, and Cys196 each coordinate Zn(2+). Ser234 carries the post-translational modification Phosphoserine.

This sequence belongs to the Gfa family. The cofactor is Zn(2+).

The protein localises to the chromosome. It localises to the centromere. The protein resides in the kinetochore. It is found in the nucleus. Its subcellular location is the cytoplasm. The protein localises to the cytoskeleton. It localises to the spindle. In terms of biological role, required for distribution of pericentromeric heterochromatin in interphase nuclei and for centromere formation and organization, chromosome alignment and cytokinesis. The protein is Centromere protein V (Cenpv) of Mus musculus (Mouse).